A 479-amino-acid polypeptide reads, in one-letter code: Ribulose bisphosphate carboxylase large chain (479 aa).

Residues 1-2 (MS) constitute a propeptide that is removed on maturation. Substrate is bound by residues Asn-123 and Thr-173. Residue Lys-175 is the Proton acceptor of the active site. Lys-177 is a binding site for substrate. Residues Lys-201, Asp-203, and Glu-204 each contribute to the Mg(2+) site. N6-carboxylysine is present on Lys-201. Ser-208 is subject to Phosphoserine. His-294 serves as the catalytic Proton acceptor. The substrate site is built by Arg-295 and His-327. Phosphothreonine is present on Thr-330. Ser-379 lines the substrate pocket.

Belongs to the RuBisCO large chain family. Type I subfamily. In terms of assembly, heterohexadecamer of 8 large chains and 8 small chains; disulfide-linked. The disulfide link is formed within the large subunit homodimers. The cofactor is Mg(2+). The disulfide bond which can form in the large chain dimeric partners within the hexadecamer appears to be associated with oxidative stress and protein turnover.

The protein localises to the plastid. It localises to the chloroplast. It carries out the reaction 2 (2R)-3-phosphoglycerate + 2 H(+) = D-ribulose 1,5-bisphosphate + CO2 + H2O. It catalyses the reaction D-ribulose 1,5-bisphosphate + O2 = 2-phosphoglycolate + (2R)-3-phosphoglycerate + 2 H(+). RuBisCO catalyzes two reactions: the carboxylation of D-ribulose 1,5-bisphosphate, the primary event in carbon dioxide fixation, as well as the oxidative fragmentation of the pentose substrate in the photorespiration process. Both reactions occur simultaneously and in competition at the same active site. The polypeptide is Ribulose bisphosphate carboxylase large chain (Lobularia maritima (Sweet alyssum)).